The sequence spans 201 residues: Peptidyl-tRNA hydrolase (201 aa).

Tyr17 is a tRNA binding site. His22 (proton acceptor) is an active-site residue. Positions 76, 78, and 124 each coordinate tRNA.

It belongs to the PTH family. Monomer.

It localises to the cytoplasm. It catalyses the reaction an N-acyl-L-alpha-aminoacyl-tRNA + H2O = an N-acyl-L-amino acid + a tRNA + H(+). In terms of biological role, hydrolyzes ribosome-free peptidyl-tRNAs (with 1 or more amino acids incorporated), which drop off the ribosome during protein synthesis, or as a result of ribosome stalling. Catalyzes the release of premature peptidyl moieties from peptidyl-tRNA molecules trapped in stalled 50S ribosomal subunits, and thus maintains levels of free tRNAs and 50S ribosomes. This chain is Peptidyl-tRNA hydrolase, found in Nitratidesulfovibrio vulgaris (strain ATCC 29579 / DSM 644 / CCUG 34227 / NCIMB 8303 / VKM B-1760 / Hildenborough) (Desulfovibrio vulgaris).